Here is a 196-residue protein sequence, read N- to C-terminus: Probable malonic semialdehyde reductase RutE (196 aa).

The protein belongs to the nitroreductase family. HadB/RutE subfamily. The cofactor is FMN.

The enzyme catalyses 3-hydroxypropanoate + NADP(+) = 3-oxopropanoate + NADPH + H(+). In terms of biological role, may reduce toxic product malonic semialdehyde to 3-hydroxypropionic acid, which is excreted. The protein is Probable malonic semialdehyde reductase RutE of Escherichia coli O157:H7.